The chain runs to 325 residues: Biotin synthase (325 aa).

A Radical SAM core domain is found at 49-279; sequence VGDKVELCSI…DKNIRYAGGR (231 aa). [4Fe-4S] cluster-binding residues include cysteine 66, cysteine 70, and cysteine 73. Cysteine 144, cysteine 204, and arginine 274 together coordinate [2Fe-2S] cluster.

It belongs to the radical SAM superfamily. Biotin synthase family. Homodimer. Requires [4Fe-4S] cluster as cofactor. The cofactor is [2Fe-2S] cluster.

The catalysed reaction is (4R,5S)-dethiobiotin + (sulfur carrier)-SH + 2 reduced [2Fe-2S]-[ferredoxin] + 2 S-adenosyl-L-methionine = (sulfur carrier)-H + biotin + 2 5'-deoxyadenosine + 2 L-methionine + 2 oxidized [2Fe-2S]-[ferredoxin]. It functions in the pathway cofactor biosynthesis; biotin biosynthesis; biotin from 7,8-diaminononanoate: step 2/2. Catalyzes the conversion of dethiobiotin (DTB) to biotin by the insertion of a sulfur atom into dethiobiotin via a radical-based mechanism. The polypeptide is Biotin synthase (Carboxydothermus hydrogenoformans (strain ATCC BAA-161 / DSM 6008 / Z-2901)).